The sequence spans 371 residues: Cytochrome b (371 aa).

Transmembrane regions (helical) follow at residues 25-45 (FGSM…FLAI), 69-90 (WIMQ…YTHI), 105-125 (WLSG…GYVL), and 170-190 (FFAL…IHII). Residues histidine 75 and histidine 89 each contribute to the heme b site. Heme b is bound by residues histidine 174 and histidine 188. Residue histidine 193 participates in a ubiquinone binding. Helical transmembrane passes span 218–238 (YKDT…LSFT), 280–300 (LGGT…PFTH), 312–332 (LAQT…WTAS), and 339–358 (FIII…IMNP).

It belongs to the cytochrome b family. The cytochrome bc1 complex contains 3 respiratory subunits (MT-CYB, CYC1 and UQCRFS1), 2 core proteins (UQCRC1 and UQCRC2) and probably 6 low-molecular weight proteins. The cofactor is heme b.

It localises to the mitochondrion inner membrane. In terms of biological role, component of the ubiquinol-cytochrome c reductase complex (complex III or cytochrome b-c1 complex) that is part of the mitochondrial respiratory chain. The b-c1 complex mediates electron transfer from ubiquinol to cytochrome c. Contributes to the generation of a proton gradient across the mitochondrial membrane that is then used for ATP synthesis. In Sinomicrurus macclellandi (Macclelland's coral snake), this protein is Cytochrome b (MT-CYB).